The sequence spans 397 residues: Mannitol-1-phosphate 5-dehydrogenase (397 aa).

An NAD(+)-binding site is contributed by Ala9–Gly20. Lys220 is a catalytic residue.

It belongs to the mannitol dehydrogenase family. As to quaternary structure, monomer.

The enzyme catalyses D-mannitol 1-phosphate + NAD(+) = beta-D-fructose 6-phosphate + NADH + H(+). Its function is as follows. Catalyzes the NAD(H)-dependent interconversion of D-fructose 6-phosphate and D-mannitol 1-phosphate in the mannitol metabolic pathway. The polypeptide is Mannitol-1-phosphate 5-dehydrogenase (Podospora anserina (strain S / ATCC MYA-4624 / DSM 980 / FGSC 10383) (Pleurage anserina)).